A 1802-amino-acid chain; its full sequence is Bromodomain and WD repeat-containing protein 3 (1802 aa).

8 WD repeats span residues 170–209 (IKMH…IWAT), 213–251 (RLLA…VWCL), 255–297 (APVA…FWQW), 307–347 (RPVK…IYYL), 353–393 (EKIA…IWQY), 400–452 (SIVL…VWNS), 456–495 (QLLH…IWDL), and 502–542 (RNYF…LFGF). A phosphoserine mark is found at Ser-693 and Ser-703. Positions 768-910 (KPSYTTQRND…PKQTRKKKGG (143 aa)) are disordered. Residues 785 to 795 (SLRRTQRKRQH) are compositionally biased toward basic residues. Residues 796–817 (TYQTRSNIEHNSQASCQNSGVQ) show a composition bias toward polar residues. Positions 818 to 829 (EDSDSSSEEDET) are enriched in acidic residues. Low complexity predominate over residues 846–859 (SESSSSDSSSEYSD). Ser-885 and Ser-886 each carry phosphoserine. Residues 889-898 (ENLKSLEERQ) show a composition bias toward basic and acidic residues. Over residues 899-909 (KKPKQTRKKKG) the composition is skewed to basic residues. In terms of domain architecture, Bromo 1 spans 1138 to 1245 (WGAHSRDEEC…DVLLRFIGDQ (108 aa)). Disordered stretches follow at residues 1262–1292 (RNST…VKCR), 1326–1361 (RQPA…LSED), 1438–1500 (IQSQ…SPVS), and 1520–1725 (SSSS…RAKR). A compositionally biased stretch (acidic residues) spans 1266–1278 (DAEEDTEIVDLDS). The Bromo 2 domain occupies 1300 to 1430 (CNPDAWKKQC…ALFESHIKNI (131 aa)). A compositionally biased stretch (basic residues) spans 1441-1453 (QKRRRPRYRKRLR). The span at 1454–1468 (SSSSSLSSSGAPSPK) shows a compositional bias: low complexity. Over residues 1479–1499 (KNDQNTSVSHARTSSPFSSPV) the composition is skewed to polar residues. Residues 1520–1533 (SSSSFGGYSRSGNS) show a composition bias toward low complexity. Residues Ser-1577 and Ser-1579 each carry the phosphoserine modification. A compositionally biased stretch (basic and acidic residues) spans 1587–1600 (GEDKEKKETKEKSH). Positions 1601-1626 (LSTSESGELGSSLSSESTCGSDSDSE) are enriched in low complexity. A compositionally biased stretch (basic and acidic residues) spans 1627-1643 (STSRTDQDYVDGDHDYS). Composition is skewed to basic residues over residues 1649 to 1666 (RPKR…RNWK) and 1684 to 1697 (RGGR…RGSR). At Ser-1763 the chain carries Phosphoserine.

In terms of tissue distribution, found in most adult tissues. Down-regulated in a majority of the B-CLL cases examined.

In terms of biological role, plays a role in the regulation of cell morphology and cytoskeletal organization. Required in the control of cell shape. The protein is Bromodomain and WD repeat-containing protein 3 (BRWD3) of Homo sapiens (Human).